We begin with the raw amino-acid sequence, 1510 residues long: Chromosome partition protein MukB (1510 aa).

The stretch at 6-30 (ELENEIELESDEVIMENENVEEIVD) forms a coiled coil. Position 75 to 82 (75 to 82 (GGNGAGKS)) interacts with ATP. Coiled coils occupy residues 346–506 (QHRL…HKMS), 553–633 (QQTP…NLTA), 673–706 (MQSQ…RLSQ), 821–847 (RAAR…QIAF), 876–1064 (EELM…IQLQ), 1094–1149 (ERAR…RELV), and 1249–1305 (DAIE…QNIS). The interval 707-824 (PDGSEDPRLN…EIPLFGRAAR (118 aa)) is flexible hinge.

This sequence belongs to the SMC family. MukB subfamily. In terms of assembly, homodimerization via its hinge domain. Binds to DNA via its C-terminal region. Interacts, and probably forms a ternary complex, with MukE and MukF via its C-terminal region. The complex formation is stimulated by calcium or magnesium. Interacts with tubulin-related protein FtsZ.

It localises to the cytoplasm. The protein localises to the nucleoid. In terms of biological role, plays a central role in chromosome condensation, segregation and cell cycle progression. Functions as a homodimer, which is essential for chromosome partition. Involved in negative DNA supercoiling in vivo, and by this means organize and compact chromosomes. May achieve or facilitate chromosome segregation by condensation DNA from both sides of a centrally located replisome during cell division. This chain is Chromosome partition protein MukB, found in Haemophilus influenzae (strain 86-028NP).